An 835-amino-acid polypeptide reads, in one-letter code: Leucine--tRNA ligase (835 aa).

A 'HIGH' region motif is present at residues 36–46 (PYPSGKIHVGH). Positions 602–606 (KMSKS) match the 'KMSKS' region motif. Residue Lys605 participates in ATP binding.

Belongs to the class-I aminoacyl-tRNA synthetase family.

The protein localises to the cytoplasm. It catalyses the reaction tRNA(Leu) + L-leucine + ATP = L-leucyl-tRNA(Leu) + AMP + diphosphate. This Rickettsia massiliae (strain Mtu5) protein is Leucine--tRNA ligase.